Here is a 307-residue protein sequence, read N- to C-terminus: Tropinone reductase homolog At2g29340 (307 aa).

13–37 (LVTGGASGIGYAIVEELAGFGARIH) contributes to the NADP(+) binding site. Position 146 (Ser146) interacts with substrate. Residue Tyr159 is the Proton acceptor of the active site.

Belongs to the short-chain dehydrogenases/reductases (SDR) family. SDR65C subfamily.

This chain is Tropinone reductase homolog At2g29340, found in Arabidopsis thaliana (Mouse-ear cress).